The chain runs to 364 residues: 3-isopropylmalate dehydrogenase (364 aa).

78 to 89 provides a ligand contact to NAD(+); it reads GPKWGTGAVRPE. Substrate is bound by residues Arg96, Arg106, Arg135, and Asp224. Positions 224, 249, and 253 each coordinate Mg(2+). An NAD(+)-binding site is contributed by 288-299; the sequence is GSAPDLPANKVN.

This sequence belongs to the isocitrate and isopropylmalate dehydrogenases family. As to quaternary structure, homodimer. It depends on Mg(2+) as a cofactor. The cofactor is Mn(2+).

It localises to the cytoplasm. It carries out the reaction (2R,3S)-3-isopropylmalate + NAD(+) = 4-methyl-2-oxopentanoate + CO2 + NADH. The protein operates within amino-acid biosynthesis; L-leucine biosynthesis; L-leucine from 3-methyl-2-oxobutanoate: step 3/4. Functionally, catalyzes the oxidation of 3-carboxy-2-hydroxy-4-methylpentanoate (3-isopropylmalate) to 3-carboxy-4-methyl-2-oxopentanoate. The product decarboxylates to 4-methyl-2 oxopentanoate. The sequence is that of 3-isopropylmalate dehydrogenase (LEU2) from Wickerhamomyces anomalus (strain ATCC 8168 / CBS 5759 / DSM 6766 / JCM 3585 / IAM 12210 / NCYC 432 / NBRC 10213 / NRRL Y-366 / AJ 5027) (Yeast).